We begin with the raw amino-acid sequence, 128 residues long: MGFQKFSPFLALSILVLLQAGSLHAAPFRSALESSPADPATLSEDEARLLLAALVQDYVQMKASELEQEQEREGSRIIAQKRACDTATCVTHRLAGLLSRSGGVVKNNFVPTNVGSKAFGRRRRDLQA.

Residues 1–25 form the signal peptide; it reads MGFQKFSPFLALSILVLLQAGSLHA. Residues 26–80 constitute a propeptide that is removed on maturation; it reads APFRSALESSPADPATLSEDEARLLLAALVQDYVQMKASELEQEQEREGSRIIAQ. Residues Cys84 and Cys89 are joined by a disulfide bond. At Phe119 the chain carries Phenylalanine amide. Residues 125 to 128 constitute a propeptide that is removed on maturation; sequence DLQA.

This sequence belongs to the calcitonin family. In terms of tissue distribution, expressed in spinal cord.

It localises to the secreted. In terms of biological role, CGRP1/CALCA is a peptide hormone that induces vasodilation mediated by the CALCRL-RAMP1 receptor complex. Dilates a variety of vessels including the coronary, cerebral and systemic vasculature. Its abundance in the CNS also points toward a neurotransmitter or neuromodulator role. It also elevates platelet cAMP. CGRP1 can also bind and activate CALCR-RAMP1 (AMYR1) receptor complex. In Homo sapiens (Human), this protein is Calcitonin gene-related peptide 1.